Reading from the N-terminus, the 891-residue chain is Receptor-like protein 50 (891 aa).

The N-terminal stretch at 1–22 (MITIIWSLCLIFCLSNSILVIA) is a signal peptide. Over 23–849 (KDLCLPDQRD…KEEKDKGLSW (827 aa)) the chain is Extracellular. N-linked (GlcNAc...) asparagine glycosylation is found at Asn62 and Asn98. 7 LRR repeats span residues 105–130 (QHLQ…NFKY), 132–152 (RVLN…LRSL), 153–176 (SYLT…SMGN), 177–201 (LKHL…LGNL), 203–225 (YLTD…MGNL), 226–249 (KSLR…LGSL), and 250–272 (SNLT…SMSS). Asn200 is a glycosylation site (N-linked (GlcNAc...) asparagine). N-linked (GlcNAc...) asparagine glycosylation is found at Asn251, Asn285, and Asn306. 4 LRR repeats span residues 286-309 (LSSL…NMSS), 310-334 (LSKL…LFML), 336-358 (SLIK…NISS), and 359-383 (PSNL…ILKL). N-linked (GlcNAc...) asparagine glycosylation occurs at Asn355. One copy of the LRR 12; degenerate repeat lies at 384-407 (VGLSALSLSFWDTGGIVDFSIFLQ). 15 LRR repeats span residues 408 to 436 (LKSL…MMHL), 438 to 453 (LSSC…LENQ), 454 to 477 (TSLY…LWRL), 478 to 504 (PTLR…IYSF), 506 to 519 (ASDN…PRAV), 520 to 544 (CEIG…EISN), 545 to 568 (KTLS…SLHG), 570 to 591 (LRSL…LINC), 593 to 614 (YLQF…WLKS), 615 to 641 (LPNL…SLSF), 642 to 665 (SKLR…YFVG), 712 to 736 (FEIY…IGIL), 737 to 760 (KELI…LSNL), 761 to 784 (SNLQ…LGEL), and 786 to 809 (FLAR…QIQS). N-linked (GlcNAc...) asparagine glycosylation is found at Asn422, Asn442, and Asn452. N-linked (GlcNAc...) asparagine glycosylation is found at Asn531, Asn544, Asn554, Asn590, and Asn605. Residues Asn743 and Asn759 are each glycosylated (N-linked (GlcNAc...) asparagine). N-linked (GlcNAc...) asparagine glycans are attached at residues Asn791 and Asn811. The helical transmembrane segment at 850–870 (VAAAIGYVPGLFCGLAIGHIL) threads the bilayer. The Cytoplasmic portion of the chain corresponds to 871–891 (TSYKRDWFMRIFSCFSSPLKK).

Belongs to the RLP family.

The protein localises to the cell membrane. The chain is Receptor-like protein 50 from Arabidopsis thaliana (Mouse-ear cress).